The following is a 430-amino-acid chain: Serine--tRNA ligase (430 aa).

235 to 237 contributes to the L-serine binding site; that stretch reads TAE. Residues 266-268 and valine 282 contribute to the ATP site; that span reads RRE. Position 289 (glutamate 289) interacts with L-serine. 353–356 lines the ATP pocket; it reads EASS. An L-serine-binding site is contributed by serine 389.

Belongs to the class-II aminoacyl-tRNA synthetase family. Type-1 seryl-tRNA synthetase subfamily. In terms of assembly, homodimer. The tRNA molecule binds across the dimer.

It is found in the cytoplasm. It catalyses the reaction tRNA(Ser) + L-serine + ATP = L-seryl-tRNA(Ser) + AMP + diphosphate + H(+). The enzyme catalyses tRNA(Sec) + L-serine + ATP = L-seryl-tRNA(Sec) + AMP + diphosphate + H(+). It participates in aminoacyl-tRNA biosynthesis; selenocysteinyl-tRNA(Sec) biosynthesis; L-seryl-tRNA(Sec) from L-serine and tRNA(Sec): step 1/1. Functionally, catalyzes the attachment of serine to tRNA(Ser). Is also able to aminoacylate tRNA(Sec) with serine, to form the misacylated tRNA L-seryl-tRNA(Sec), which will be further converted into selenocysteinyl-tRNA(Sec). This chain is Serine--tRNA ligase, found in Chlorobium phaeovibrioides (strain DSM 265 / 1930) (Prosthecochloris vibrioformis (strain DSM 265)).